A 354-amino-acid chain; its full sequence is Phosphate acyltransferase (354 aa).

This sequence belongs to the PlsX family. As to quaternary structure, homodimer. Probably interacts with PlsY.

The protein resides in the cytoplasm. The catalysed reaction is a fatty acyl-[ACP] + phosphate = an acyl phosphate + holo-[ACP]. It participates in lipid metabolism; phospholipid metabolism. Catalyzes the reversible formation of acyl-phosphate (acyl-PO(4)) from acyl-[acyl-carrier-protein] (acyl-ACP). This enzyme utilizes acyl-ACP as fatty acyl donor, but not acyl-CoA. The sequence is that of Phosphate acyltransferase from Nitrobacter hamburgensis (strain DSM 10229 / NCIMB 13809 / X14).